The chain runs to 512 residues: Cytochrome P450 monooxygenase gliC (512 aa).

A signal peptide spans 1–19; it reads MAFTLTILVPCMVLALVAA. 3 N-linked (GlcNAc...) asparagine glycosylation sites follow: N118, N421, and N434. C452 contacts heme.

It belongs to the cytochrome P450 family. It depends on heme as a cofactor.

Its pathway is mycotoxin biosynthesis. Functionally, cytochrome P450 monooxygenase; part of the gene cluster that mediates the biosynthesis of gliotoxin, a member of the epipolythiodioxopiperazine (ETP) class of toxins characterized by a disulfide bridged cyclic dipeptide. The first step in gliotoxin biosynthesis is the condensation of serine and phenylalanine to form the cyclo-L-phenylalanyl-L-serine diketopiperazine (DKP) by the NRPS gliP. GliP is also able to produce the DKP cyclo-L-tryptophanyl-L-serine, suggesting that the substrate specificity of the first adenylation (A) domain in gliP is sufficiently relaxed to accommodate both L-Phe and L-Trp. The cytochrome P450 monooxygenase gliC has been shown to catalyze the subsequent hydroxylation of the alpha-carbon of L-Phe in cyclo-L-phenylalanyl-L-serine whereas the second cytochrome P450 enzyme, gliF, is presumably involved in the modification of the DKP side chain. The glutathione S-transferase (GST) gliG then forms a bis-glutathionylated biosynthetic intermediate which is responsible for the sulfurization of gliotoxin. This bis-glutathionylated intermediate is subsequently processed by the gamma-glutamyl cyclotransferase gliK to remove both gamma-glutamyl moieties. Subsequent processing via gliI yields a biosynthetic intermediate, which is N-methylated via the N-methyltransferase gliN, before the gliotoxin oxidoreductase gliT-mediated disulfide bridge closure. GliN-mediated amide methylation confers stability to ETP, damping the spontaneous formation of tri- and tetrasulfides. Intracellular dithiol gliotoxin oxidized by gliT is subsequently effluxed by gliA. Gliotoxin contributes to pathogenesis during invasive aspergillosis. In macrophages and neutrophils, gliotoxin showed inhibition of various different cell functions including cytokine production, antigen presentation, phagocytosis, and production of reactive oxygen species. This chain is Cytochrome P450 monooxygenase gliC, found in Aspergillus fumigatus (strain ATCC MYA-4609 / CBS 101355 / FGSC A1100 / Af293) (Neosartorya fumigata).